We begin with the raw amino-acid sequence, 311 residues long: Probable cysteine synthase (311 aa).

Position 45 is an N6-(pyridoxal phosphate)lysine (Lys45). Pyridoxal 5'-phosphate-binding positions include Asn75, 182–186 (GTGGT), and Ser270.

It belongs to the cysteine synthase/cystathionine beta-synthase family. Requires pyridoxal 5'-phosphate as cofactor.

It catalyses the reaction O-acetyl-L-serine + hydrogen sulfide = L-cysteine + acetate. It participates in amino-acid biosynthesis; L-cysteine biosynthesis; L-cysteine from L-serine: step 2/2. The chain is Probable cysteine synthase (ytkP) from Bacillus subtilis (strain 168).